A 1026-amino-acid chain; its full sequence is MRFFALFIYRPVATILIAAAITLCGILGFRLLPVAPLPQVDFPVIMVRASLPGASPETMASSVATPLERSLGRIAGVNEMTSSSSLGSTRIILEFNFDRDINGAARDVQAAINAAQSLLPSGMPSRPTYRKANPSDAPIMILTLTSDSWSQGELYDFASTQLAQTIAQIDGVGDVDVGGSSLPAVRIGLNPQALFNQGVSLDEVRKAIDSANVRRPQGAIEDNVHRWQIQTNDELKTAAEYQPLIIHYKNGAAVRLDDVASVTDSVQDVRNAGMTNAKPAILLMIRKLPETNIIQTVDSIRAKLPELQAMIPAAIDLQIAQDRSPTIRASLQEVEETLAISVALVILVVFLFLRSGRATLIPAVAVPVSLISTFAAMYLCGFSLNNLSLMALTIATGFVVDDAIVVLENITRHLEAGMKPLQAALQGTQEVGFTVISMSLSLVAVFLPLLLMGGLPGRLLREFAVTLSVAIGISLVVSLTLTPMMCGWMLKSSKPRTQPRKRGVGRLLVALQQSYGTSLKWVLNHTRLVGVVFLGTIALNIWLYIAIPKTFFPEQDTGVLMGGIQADQSISFQAMRGKLQDFMKIIRDDPAVNNVTGFTGGSRVNSGMMFITLKPRGERKESAQQIIDRLRVKLTKEPGARLFLMAVQDIRIGGRQANASYQYTLLSDSLAALREWEPKIRKALSALPQLADINSDHQDNGAEMNLIYDRDTMSRLGIDVQAANSLLNNAFGQRQISTIYQPMNQYKVVMEVDPRYSQDISALEKMFVINHDGKAIPLSYFAQWRPANAPLSVNHQGLSAASTIAFNLPTGTSLSQATEAINRTMTQLGVPPTVRGSFAGTAQVFQQTMNSQLILIMAAIATVYIVLGILYESYVHPLTILSTLPSAGVGALLALELFNAPFSLIALIGIMLLIGIVKKNAIMMVDFALEAQRSGGLTPEQAIFQACLLRFRPIMMTTLAAMFGALPLVLSGGDGSELRQPLGITIVGGLVMSQLLTLYTTPVVYLFFDRLRLRFSRKNSKPVVEI.

11 helical membrane passes run 15 to 35, 333 to 353, 360 to 380, 387 to 407, 431 to 451, 463 to 483, 528 to 548, 853 to 873, 897 to 917, 953 to 973, and 984 to 1004; these read ILIA…LPVA, EVEE…FLFL, LIPA…MYLC, LSLM…IVVL, VGFT…PLLL, FAVT…TLTP, LVGV…IAIP, LILI…LYES, LFNA…IGIV, PIMM…LSGG, and ITIV…TPVV.

Belongs to the resistance-nodulation-cell division (RND) (TC 2.A.6) family. MdtC subfamily. As to quaternary structure, part of a tripartite efflux system composed of MdtA, MdtB and MdtC. MdtC forms a heteromultimer with MdtB.

It is found in the cell inner membrane. This is Multidrug resistance protein MdtC from Salmonella arizonae (strain ATCC BAA-731 / CDC346-86 / RSK2980).